The sequence spans 565 residues: Tyrosine-protein phosphatase non-receptor type 5 (565 aa).

Positions 1–16 are enriched in basic and acidic residues; the sequence is MNYEGARSERENHAAD. Residues 1 to 80 form a disordered region; that stretch reads MNYEGARSER…KPPPRGAGSH (80 aa). A compositionally biased stretch (pro residues) spans 56 to 75; the sequence is MPPPPPPSPPSDPAQKPPPR. 2 consecutive transmembrane segments (helical) span residues 88 to 108 and 146 to 166; these read LCLF…FSGY and LLLV…WHLL. The interval 169 to 189 is disordered; sequence PPEPPTPLPPEDRRQSVSRQP. The residue at position 245 (Ser245) is a Phosphoserine; by PKA. At Thr255 the chain carries Phosphothreonine; by MAPK. Ser268 is modified (phosphoserine; by MAPK). The region spanning 300 to 555 is the Tyrosine-protein phosphatase domain; it reads LQAEFFEIPM…QFVHHVMSLY (256 aa). Residues Asp461, 496–502, and Gln540 contribute to the substrate site; that span reads CSAGIGR. Cys496 (phosphocysteine intermediate) is an active-site residue.

This sequence belongs to the protein-tyrosine phosphatase family. Non-receptor class subfamily. Post-translationally, phosphorylation at Ser-245 by PKA deactivates PTPN5. Phosphorylation at Thr-255 and Ser-268 by MAPKs stabilizes the phosphatase, dephosphorylation of these sites results in ubiquitin-mediated degradation of the active phosphatase.

The protein localises to the endoplasmic reticulum membrane. It carries out the reaction O-phospho-L-tyrosyl-[protein] + H2O = L-tyrosyl-[protein] + phosphate. May regulate the activity of several effector molecules involved in synaptic plasticity and neuronal cell survival, including MAPKs, Src family kinases and NMDA receptors. The sequence is that of Tyrosine-protein phosphatase non-receptor type 5 (PTPN5) from Homo sapiens (Human).